A 282-amino-acid polypeptide reads, in one-letter code: Acetyl-coenzyme A carboxylase carboxyl transferase subunit beta (282 aa).

The CoA carboxyltransferase N-terminal domain maps to 23 to 282 (IWTKCGQCDA…MLSKLHHQQA (260 aa)). Residues Cys27, Cys30, Cys46, and Cys49 each contribute to the Zn(2+) site. The segment at 27 to 49 (CGQCDAVLYKTELEKQLGVCPKC) adopts a C4-type zinc-finger fold.

Belongs to the AccD/PCCB family. Acetyl-CoA carboxylase is a heterohexamer composed of biotin carboxyl carrier protein (AccB), biotin carboxylase (AccC) and two subunits each of ACCase subunit alpha (AccA) and ACCase subunit beta (AccD). Zn(2+) is required as a cofactor.

It is found in the cytoplasm. The enzyme catalyses N(6)-carboxybiotinyl-L-lysyl-[protein] + acetyl-CoA = N(6)-biotinyl-L-lysyl-[protein] + malonyl-CoA. It participates in lipid metabolism; malonyl-CoA biosynthesis; malonyl-CoA from acetyl-CoA: step 1/1. In terms of biological role, component of the acetyl coenzyme A carboxylase (ACC) complex. Biotin carboxylase (BC) catalyzes the carboxylation of biotin on its carrier protein (BCCP) and then the CO(2) group is transferred by the transcarboxylase to acetyl-CoA to form malonyl-CoA. The sequence is that of Acetyl-coenzyme A carboxylase carboxyl transferase subunit beta from Pseudoalteromonas atlantica (strain T6c / ATCC BAA-1087).